Here is a 348-residue protein sequence, read N- to C-terminus: Serpentine receptor class alpha-29 (348 aa).

6 helical membrane-spanning segments follow: residues Phe28–Trp48, Phe108–Phe130, Gly145–Phe165, Ile193–Ile213, Cys246–Phe266, and Leu280–Ile300.

This sequence belongs to the nematode receptor-like protein sra family.

The protein resides in the membrane. The chain is Serpentine receptor class alpha-29 (sra-29) from Caenorhabditis elegans.